Consider the following 426-residue polypeptide: Glutamate-1-semialdehyde 2,1-aminomutase (426 aa).

Lys-265 carries the post-translational modification N6-(pyridoxal phosphate)lysine.

This sequence belongs to the class-III pyridoxal-phosphate-dependent aminotransferase family. HemL subfamily. As to quaternary structure, homodimer. The cofactor is pyridoxal 5'-phosphate.

The protein localises to the cytoplasm. The catalysed reaction is (S)-4-amino-5-oxopentanoate = 5-aminolevulinate. It functions in the pathway porphyrin-containing compound metabolism; protoporphyrin-IX biosynthesis; 5-aminolevulinate from L-glutamyl-tRNA(Glu): step 2/2. This Salmonella paratyphi A (strain ATCC 9150 / SARB42) protein is Glutamate-1-semialdehyde 2,1-aminomutase.